The following is a 269-amino-acid chain: Protein MGF 110-1L (269 aa).

A topological domain (cytoplasmic) is located at residue Met-1. The stretch at 1 to 145 is one A repeat; it reads MLGLQIFTLL…YVRKRSLQTV (145 aa). Residues 2–18 traverse the membrane as a helical segment; that stretch reads LGLQIFTLLSIPTLLYT. Topologically, residues 19–116 are extracellular; that stretch reads YELELLDLTR…HEWHEAVIRK (98 aa). Asn-75 carries N-linked (GlcNAc...) asparagine; by host glycosylation. The helical transmembrane segment at 117–137 threads the bilayer; sequence WQKLLTYGFYLVGCVLVANYV. Residues 138–144 lie on the Cytoplasmic side of the membrane; it reads RKRSLQT. The chain crosses the membrane as a helical span at residues 145-165; it reads VMYLLVLLVIFFLLSQLMLYR. A B repeat occupies 147–269; it reads YLLVLLVIFF…DNLMKKQDMM (123 aa). The Extracellular segment spans residues 166–269; that stretch reads ELEDKKHKIG…DNLMKKQDMM (104 aa).

It belongs to the asfivirus MGF 110 family.

It is found in the host membrane. Its function is as follows. Plays a role in virus cell tropism, and may be required for efficient virus replication in macrophages. The chain is Protein MGF 110-1L from African swine fever virus (isolate Tick/South Africa/Pretoriuskop Pr4/1996) (ASFV).